A 125-amino-acid chain; its full sequence is Phosphoribosyl-AMP cyclohydrolase (125 aa).

Mg(2+) is bound at residue Asp-91. Cys-92 is a binding site for Zn(2+). Mg(2+) is bound by residues Asp-93 and Asp-95. The Zn(2+) site is built by Cys-108 and Cys-115.

The protein belongs to the PRA-CH family. Homodimer. The cofactor is Mg(2+). Zn(2+) is required as a cofactor.

It is found in the cytoplasm. It catalyses the reaction 1-(5-phospho-beta-D-ribosyl)-5'-AMP + H2O = 1-(5-phospho-beta-D-ribosyl)-5-[(5-phospho-beta-D-ribosylamino)methylideneamino]imidazole-4-carboxamide. It functions in the pathway amino-acid biosynthesis; L-histidine biosynthesis; L-histidine from 5-phospho-alpha-D-ribose 1-diphosphate: step 3/9. Its function is as follows. Catalyzes the hydrolysis of the adenine ring of phosphoribosyl-AMP. The sequence is that of Phosphoribosyl-AMP cyclohydrolase from Streptomyces griseus subsp. griseus (strain JCM 4626 / CBS 651.72 / NBRC 13350 / KCC S-0626 / ISP 5235).